The chain runs to 518 residues: Probable alginate O-acetylase AlgI (518 aa).

Helical transmembrane passes span 2 to 24 (VFSSNVFLFMFLPIFLGLYYLSG), 39 to 61 (FYAWWRVDFLALFIGVTVWNYWI), 78 to 100 (WLLLGVIVDLCILGYFKYANFGV), 115 to 137 (FILTHVLLPIGISFYVFESISYI), 150 to 172 (NLIDFAAFVAIFPHLIAGPVLRF), 319 to 341 (GLWHGANVTYIIWGAWHGMWLAI), 354 to 373 (FNVIRWALTFLLVVIGWVIF), and 402 to 424 (ASLTGLQVATLVVAYATLAFFGL). The active site involves H322. The disordered stretch occupies residues 435-456 (SGKSARADGPATEQPGTIKAVP). Residues 493 to 515 (LILLLFVASILKLSAQSFSPFLY) traverse the membrane as a helical segment.

It belongs to the membrane-bound acyltransferase family.

The protein localises to the cell inner membrane. It functions in the pathway glycan biosynthesis; alginate biosynthesis. Together with AlgJ and AlgF, forms an inner membrane complex which probably interacts with the alginate polymerization-transport complex and adds acetyl groups at the O-2 and O-3 positions of mannuronate residues. Acetylation of alginate is important for the architecture of biofilms and increases the ability of alginate to act as a defense barrier. This is Probable alginate O-acetylase AlgI (algI) from Pseudomonas syringae pv. tomato (strain ATCC BAA-871 / DC3000).